A 633-amino-acid chain; its full sequence is Extracellular metalloproteinase 3 (633 aa).

The N-terminal stretch at 1-18 is a signal peptide; that stretch reads MHGLLLAGLLALPMNVLA. Residues 19–246 constitute a propeptide that is removed on maturation; the sequence is HPAEQHASNV…VHNVVDYVAS (228 aa). The N-linked (GlcNAc...) asparagine glycan is linked to asparagine 410. Position 429 (histidine 429) interacts with Zn(2+). Glutamate 430 is an active-site residue. Histidine 433 is a binding site for Zn(2+). N-linked (GlcNAc...) asparagine glycans are attached at residues asparagine 480 and asparagine 622.

The protein belongs to the peptidase M36 family. The cofactor is Zn(2+).

It localises to the secreted. Its function is as follows. Secreted metalloproteinase probably acting as a virulence factor. In Arthroderma benhamiae (Trichophyton mentagrophytes), this protein is Extracellular metalloproteinase 3 (MEP3).